The primary structure comprises 640 residues: Cytochrome P450 monooxygenase cyp1 (640 aa).

Asparagine 71 is a glycosylation site (N-linked (GlcNAc...) asparagine). The helical transmembrane segment at 120 to 139 threads the bilayer; it reads LLVFLVGLFLGTIYLLYRYW. Asparagine 350 carries an N-linked (GlcNAc...) asparagine glycan. Residue cysteine 572 coordinates heme.

It belongs to the cytochrome P450 family. It depends on heme as a cofactor.

It is found in the membrane. Its pathway is secondary metabolite biosynthesis. In terms of biological role, cytochrome P450 monooxygenase; part of the gene cluster that mediates the biosynthesis of the glycolipid biosurfactant ustilagic acid (UA). UA is a secreted cellobiose glycolipid that is toxic for many microorganisms and confers biocontrol activity to U.maydis. UA consists of 15,16-dihydroxypalmitic or 2,15,16-trihydroxypalmitic acid, which is O-glycosidically linked to cellobiose at its terminal hydroxyl group. In addition, the cellobiose moiety is acetylated and acylated with a short-chain hydroxy fatty acid. UA biosynthesis starts with omega-hydroxylation of palmitic acid catalyzed by the cytochrome P450 monooxygenase cyp1. Terminal hydroxylation of palmitic acid precedes subterminal hydroxylation catalyzed by the cytochrome P450 monooxygenase cyp2. Sequential glucosylation of the hydroxy fatty acid is probably catalyzed by the glycosyltransferase ugt1. The cellobiose lipid is further decorated by acetylation of the proximal glucose residue and by acylation with a short-chain beta-hydroxy fatty acid at the distal glucose residue. The acyltransferase uat1 may be a good candidate for catalyzing either acetylation or acylation of the cellobiose lipid. The fatty acid synthase fas2 may be involved in synthesis of the carbon backbone of the short-chain beta-hydroxy fatty acid esterified to the cellobiose disaccharide. The secreted UA consists of a mixture of both alpha-hydroxylated and non-hydroxylated glycolipids; therefore, alpha-hydroxylation of the long-chain fatty, catalyzed by the fatty acid hydroxylase ahd1, occurs late in UA biosynthesis and may be the last step before secretion. This Mycosarcoma maydis (Corn smut fungus) protein is Cytochrome P450 monooxygenase cyp1.